A 211-amino-acid chain; its full sequence is Probable nicotinate-nucleotide adenylyltransferase (211 aa).

The protein belongs to the NadD family.

It carries out the reaction nicotinate beta-D-ribonucleotide + ATP + H(+) = deamido-NAD(+) + diphosphate. The protein operates within cofactor biosynthesis; NAD(+) biosynthesis; deamido-NAD(+) from nicotinate D-ribonucleotide: step 1/1. Catalyzes the reversible adenylation of nicotinate mononucleotide (NaMN) to nicotinic acid adenine dinucleotide (NaAD). In Lactiplantibacillus plantarum (strain ATCC BAA-793 / NCIMB 8826 / WCFS1) (Lactobacillus plantarum), this protein is Probable nicotinate-nucleotide adenylyltransferase.